A 248-amino-acid chain; its full sequence is Probable transcriptional regulatory protein Nham_3525 (248 aa).

The segment at M1–K21 is disordered.

This sequence belongs to the TACO1 family.

It is found in the cytoplasm. The protein is Probable transcriptional regulatory protein Nham_3525 of Nitrobacter hamburgensis (strain DSM 10229 / NCIMB 13809 / X14).